The primary structure comprises 209 residues: Uracil phosphoribosyltransferase (209 aa).

5-phospho-alpha-D-ribose 1-diphosphate-binding positions include Arg79, Arg104, and 131 to 139; that span reads DPMLATGGS. Uracil-binding positions include Ile194 and 199 to 201; that span reads GDA. Position 200 (Asp200) interacts with 5-phospho-alpha-D-ribose 1-diphosphate.

The protein belongs to the UPRTase family. Mg(2+) serves as cofactor.

The enzyme catalyses UMP + diphosphate = 5-phospho-alpha-D-ribose 1-diphosphate + uracil. It participates in pyrimidine metabolism; UMP biosynthesis via salvage pathway; UMP from uracil: step 1/1. Its activity is regulated as follows. Allosterically activated by GTP. Its function is as follows. Catalyzes the conversion of uracil and 5-phospho-alpha-D-ribose 1-diphosphate (PRPP) to UMP and diphosphate. In Chromohalobacter salexigens (strain ATCC BAA-138 / DSM 3043 / CIP 106854 / NCIMB 13768 / 1H11), this protein is Uracil phosphoribosyltransferase.